We begin with the raw amino-acid sequence, 163 residues long: Transcriptional repressor NrdR (163 aa).

Residues 3 to 34 (CPFCRHDDSRVVDSRTTDDGSSIRRRRQCPNC) fold into a zinc finger. An ATP-cone domain is found at 46–136 (LSVIKRSGAP…VYQAFDSLAD (91 aa)).

The protein belongs to the NrdR family. The cofactor is Zn(2+).

Negatively regulates transcription of bacterial ribonucleotide reductase nrd genes and operons by binding to NrdR-boxes. The protein is Transcriptional repressor NrdR of Kineococcus radiotolerans (strain ATCC BAA-149 / DSM 14245 / SRS30216).